The chain runs to 142 residues: FAD synthase (142 aa).

Residues 9–10, 14–17, and Asp92 each bind ATP; these read TF and HPGH.

The protein belongs to the archaeal FAD synthase family. Homodimer. A divalent metal cation serves as cofactor.

It catalyses the reaction FMN + ATP + H(+) = FAD + diphosphate. Its pathway is cofactor biosynthesis; FAD biosynthesis; FAD from FMN: step 1/1. Its function is as follows. Catalyzes the transfer of the AMP portion of ATP to flavin mononucleotide (FMN) to produce flavin adenine dinucleotide (FAD) coenzyme. In Methanohalophilus mahii (strain ATCC 35705 / DSM 5219 / SLP), this protein is FAD synthase.